A 394-amino-acid chain; its full sequence is Phosphoglycerate kinase (394 aa).

Substrate contacts are provided by residues 21–23 (DFN), arginine 36, 59–62 (HLGR), arginine 118, and arginine 151. Serine 183 carries the post-translational modification Phosphoserine. ATP-binding residues include lysine 201 and glycine 292. Residue threonine 299 is modified to Phosphothreonine. Residues glutamate 323 and 350-353 (GGDS) contribute to the ATP site.

The protein belongs to the phosphoglycerate kinase family. Monomer.

The protein resides in the cytoplasm. The enzyme catalyses (2R)-3-phosphoglycerate + ATP = (2R)-3-phospho-glyceroyl phosphate + ADP. It functions in the pathway carbohydrate degradation; glycolysis; pyruvate from D-glyceraldehyde 3-phosphate: step 2/5. This is Phosphoglycerate kinase from Bacillus mycoides (strain KBAB4) (Bacillus weihenstephanensis).